A 78-amino-acid chain; its full sequence is Large ribosomal subunit protein bL28 (78 aa).

Belongs to the bacterial ribosomal protein bL28 family.

This Prochlorococcus marinus (strain MIT 9303) protein is Large ribosomal subunit protein bL28.